Consider the following 343-residue polypeptide: Adenosine kinase (343 aa).

D296 is an active-site residue.

It belongs to the carbohydrate kinase PfkB family. The cofactor is Mg(2+).

The enzyme catalyses adenosine + ATP = AMP + ADP + H(+). The protein operates within purine metabolism; AMP biosynthesis via salvage pathway; AMP from adenosine: step 1/1. In terms of biological role, ATP dependent phosphorylation of adenosine and other related nucleoside analogs to monophosphate derivatives. Can also act on the cytokinin isopentenyladenosine to produce isopentenyladenosine monophosphate. The polypeptide is Adenosine kinase (ADK) (Physcomitrium patens (Spreading-leaved earth moss)).